Consider the following 640-residue polypeptide: Putative GTPase-activating protein C1620.12c (640 aa).

Positions 96–120 (QPLQGHSPVPSFMSTASTNISSSKI) are disordered. The span at 109–120 (STASTNISSSKI) shows a compositional bias: low complexity. Residues 215 to 408 (CIPSPCRKLV…RLMDLIAIYG (194 aa)) form the Rab-GAP TBC domain. Residues 500 to 636 (RQNNLEELKN…LQTKWKSVSE (137 aa)) adopt a coiled-coil conformation.

It belongs to the GYP5 family.

Its subcellular location is the nucleus. It localises to the cytoplasm. The protein is Putative GTPase-activating protein C1620.12c of Schizosaccharomyces pombe (strain 972 / ATCC 24843) (Fission yeast).